The primary structure comprises 348 residues: Ion-translocating oxidoreductase complex subunit D (348 aa).

Transmembrane regions (helical) follow at residues 25–45, 68–88, and 124–144; these read ILAA…GTFI, PISP…IGVA, and AMAA…TWAA. T182 carries the FMN phosphoryl threonine modification. 5 helical membrane passes run 211 to 231, 237 to 257, 263 to 283, 296 to 316, and 317 to 337; these read TGEG…FLLA, WHIS…GFGA, ASPL…FIAT, LLFG…GGYP, and DGVA…DYYI.

The protein belongs to the NqrB/RnfD family. The complex is composed of six subunits: RnfA, RnfB, RnfC, RnfD, RnfE and RnfG. FMN is required as a cofactor.

Its subcellular location is the cell inner membrane. Functionally, part of a membrane-bound complex that couples electron transfer with translocation of ions across the membrane. This chain is Ion-translocating oxidoreductase complex subunit D, found in Shewanella amazonensis (strain ATCC BAA-1098 / SB2B).